The sequence spans 172 residues: MAKIQARTQNEGPEDGLREKMIAINRVTKVVKGGRILGFAALTVVGDGDGRVGMGKGKSKEVPAAVQKAMEEARRNLAKISIKNGTLHHRVTGHWGAASVVMIPAPKGTGIIAGGPMRAVFEVMGITDIVAKSHGSSNPYNMVRATLDGLKNSTTASEVAAKRGLTVEEIFA.

The region spanning 17 to 80 (LREKMIAINR…EEARRNLAKI (64 aa)) is the S5 DRBM domain.

Belongs to the universal ribosomal protein uS5 family. Part of the 30S ribosomal subunit. Contacts proteins S4 and S8.

Functionally, with S4 and S12 plays an important role in translational accuracy. Its function is as follows. Located at the back of the 30S subunit body where it stabilizes the conformation of the head with respect to the body. The sequence is that of Small ribosomal subunit protein uS5 from Variovorax paradoxus (strain S110).